We begin with the raw amino-acid sequence, 513 residues long: Matrix metalloproteinase-27 (513 aa).

Residues 1 to 17 (MKRLLLLFLFFITFSSA) form the signal peptide. Residues 18–98 (FPLVRMTENE…PRCGVPDVGQ (81 aa)) constitute a propeptide, activation peptide. N-linked (GlcNAc...) asparagine glycosylation is present at N55. The Cysteine switch motif lies at 89 to 96 (PRCGVPDV). C91 provides a ligand contact to Zn(2+). Residue N110 is glycosylated (N-linked (GlcNAc...) asparagine). Ca(2+)-binding residues include D121 and D155. H165 is a binding site for Zn(2+). Positions 173, 174, and 178 each coordinate Ca(2+). Position 181 (H181) interacts with Zn(2+). G188 and D192 together coordinate Ca(2+). H194 lines the Zn(2+) pocket. Residues D196 and E199 each coordinate Ca(2+). H216 serves as a coordination point for Zn(2+). Residue E217 is part of the active site. H220 and H226 together coordinate Zn(2+). 4 Hemopexin repeats span residues 276-325 (PHAC…WPSL), 326-371 (PADL…GFPG), 373-421 (VKKI…FPGI), and 422-465 (SIRV…WFQC). Residues C279 and C465 are joined by a disulfide bond. D286 provides a ligand contact to Ca(2+). Positions 377 and 426 each coordinate Ca(2+). N452 carries N-linked (GlcNAc...) asparagine glycosylation. Positions 466–513 (KEPKNSSFGFDINKEKAHSGGIKILYHKSLSLFIFGIVHLLKNTSIYQ) are required for retention in the endoplasmic reticulum.

The protein belongs to the peptidase M10A family. Requires Ca(2+) as cofactor. Zn(2+) serves as cofactor. Post-translationally, N-glycosylated. In terms of tissue distribution, expressed in B-cells. Expressed in a subset of endometrial macrophages related to menstruation and in ovarian and peritoneal endometriotic lesions (at protein level).

The protein resides in the endoplasmic reticulum. Its function is as follows. Matrix metalloproteinases degrade protein components of the extracellular matrix such as fibronectin, laminin, gelatins and/or collagens. This chain is Matrix metalloproteinase-27 (MMP27), found in Homo sapiens (Human).